The following is an 85-amino-acid chain: Small proline-rich protein 2D (85 aa).

Over residues 1–11 the composition is skewed to low complexity; sequence MSYQQQQCKQP. Residues 1 to 20 form a disordered region; it reads MSYQQQQCKQPCQPPPVCPP. A run of 4 repeats spans residues 21–29, 30–38, 39–47, and 48–56. The 4 X 9 AA approximate tandem repeats stretch occupies residues 21–56; it reads KKCPEPCPPLKCPEPCPPPKCPEPCPPPKCPEPCPE. The segment at 57-85 is disordered; that stretch reads PCPPPSCQQKCPPAQPPPPCQQKCPPKSK.

This sequence belongs to the cornifin (SPRR) family. Expressed in uterus.

The protein localises to the cytoplasm. Cross-linked envelope protein of keratinocytes. It is a keratinocyte protein that first appears in the cell cytosol, but ultimately becomes cross-linked to membrane proteins by transglutaminase. All that results in the formation of an insoluble envelope beneath the plasma membrane. In Mus musculus (Mouse), this protein is Small proline-rich protein 2D (Sprr2d).